A 351-amino-acid chain; its full sequence is Pentatricopeptide repeat-containing protein At2g40240, mitochondrial (351 aa).

Residues 1–27 (MSLLRRRFVKQSVNCITFLQILAERSF) constitute a mitochondrion transit peptide. PPR repeat units follow at residues 106–140 (RKNA…RLGL), 141–175 (TPST…SVSM), 176–210 (DVTA…GNSP), 211–245 (DSRS…GVTV), 246–280 (LYST…DLRL), and 281–315 (DSES…GLRM).

Belongs to the PPR family. P subfamily.

The protein localises to the mitochondrion. The protein is Pentatricopeptide repeat-containing protein At2g40240, mitochondrial of Arabidopsis thaliana (Mouse-ear cress).